The chain runs to 208 residues: Small ribosomal subunit protein eS8 (208 aa).

The tract at residues 1 to 33 is disordered; it reads MGISRDHWHKRRATGGKRKPIRKKRKFELGRPA. Residues 7–26 show a composition bias toward basic residues; the sequence is HWHKRRATGGKRKPIRKKRK.

This sequence belongs to the eukaryotic ribosomal protein eS8 family.

The chain is Small ribosomal subunit protein eS8 (RpS8) from Apis mellifera (Honeybee).